We begin with the raw amino-acid sequence, 458 residues long: Ammonium transporter Rh type B (458 aa).

The Cytoplasmic portion of the chain corresponds to 1-13 (MAGSPSRAAGRRL). Residues 14-34 (QLPLLCLFLQGATAVLFAVFV) traverse the membrane as a helical segment. Topologically, residues 35–61 (RYNHKTDAALWHRGNYSNADNEFYFRY) are extracellular. N-linked (GlcNAc...) asparagine glycosylation occurs at Asn-49. A helical membrane pass occupies residues 62–82 (PSFQDVHAMVFVGFGFLMVFL). Residues 83-86 (QRYG) are Cytoplasmic-facing. A helical transmembrane segment spans residues 87 to 107 (FSSVGFTFLLAAFALQWSTLV). Residues 108 to 124 (QGFLHSFHSGHIHVGVE) lie on the Extracellular side of the membrane. A helical membrane pass occupies residues 125-145 (SMINADFCAGAVLISFGAVLG). Over 146–149 (KTGP) the chain is Cytoplasmic. A helical transmembrane segment spans residues 150 to 170 (AQLLLMALLEVVLFGINEFVL). Residues 171 to 178 (LHLLGVRD) lie on the Extracellular side of the membrane. Residues 179-201 (AGGSMTIHTFGAYFGLVLSRVLY) traverse the membrane as a helical segment. At 202 to 219 (RPQLEKSKHRQGSVYHSD) the chain is on the cytoplasmic side. Residues 220–240 (LFAMIGTIFLWIFWPSFNSAL) traverse the membrane as a helical segment. At 241-251 (TALGAGQHRTA) the chain is on the extracellular side. The chain crosses the membrane as a helical span at residues 252-272 (LNTYYSLAASTLGTFALSALV). At 273–282 (GEDGRLDMVH) the chain is on the cytoplasmic side. The chain crosses the membrane as a helical span at residues 283-303 (IQNAALAGGVVVGTSSEMMLT). Position 304 (Pro-304) is a topological domain, extracellular. A helical membrane pass occupies residues 305–325 (FGALAAGFLAGTVSTLGYKFF). Over 326 to 346 (TPILESKFKVQDTCGVHNLHG) the chain is Cytoplasmic. Residues 347–367 (MPGVLGALLGVLVAGLATHEA) traverse the membrane as a helical segment. Residues 368-393 (YGDGLESVFPLIAEGQRSATSQAMLQ) lie on the Extracellular side of the membrane. The chain crosses the membrane as a helical span at residues 394–414 (LFGLFVTLMFASVGGGLGGLL). Over 415 to 458 (LKLPFLDSPPDSQCYEDQVHWQVPGEHEDEAQRPLRVEEADTQA) the chain is Cytoplasmic. The interval 416–424 (KLPFLDSPP) is interaction with ANK3. Residues 429–432 (YEDQ) carry the Basolateral sorting signal motif. Residues 439 to 458 (GEHEDEAQRPLRVEEADTQA) form a disordered region. Over residues 444–458 (EAQRPLRVEEADTQA) the composition is skewed to basic and acidic residues.

This sequence belongs to the ammonium transporter (TC 2.A.49) family. Rh subfamily. Interacts (via C-terminus) with ANK2 and ANK3; required for targeting to the basolateral membrane. N-glycosylated.

The protein resides in the cell membrane. It localises to the basolateral cell membrane. It carries out the reaction NH4(+)(in) = NH4(+)(out). It catalyses the reaction methylamine(out) = methylamine(in). The enzyme catalyses CO2(out) = CO2(in). Its function is as follows. Ammonium transporter involved in the maintenance of acid-base homeostasis. Transports ammonium and its related derivative methylammonium across the basolateral plasma membrane of epithelial cells likely contributing to renal transepithelial ammonia transport and ammonia metabolism. May transport either NH4(+) or NH3 ammonia species predominantly mediating an electrogenic NH4(+) transport. May act as a CO2 channel providing for renal acid secretion. The polypeptide is Ammonium transporter Rh type B (RHBG) (Papio hamadryas (Hamadryas baboon)).